Consider the following 488-residue polypeptide: uncharacterized protein (488 aa).

NAD(+) is bound at residue 27–38; it reads IVHFGFGAFHRA.

It belongs to the mannitol dehydrogenase family. UxuB subfamily.

This is an uncharacterized protein from Escherichia coli (strain K12).